The following is a 70-amino-acid chain: MFTLKKSLLLLFFLGTINLSLCEQERNAEEERRDDSDKRDVEVEKRFLSTLLNVASNVVPTLICKITKKC.

Positions Met1 to Cys22 are cleaved as a signal peptide. Positions Glu23 to Glu44 are cleaved as a propeptide — removed in mature form. A disulfide bond links Cys64 and Cys70.

This sequence belongs to the frog skin active peptide (FSAP) family. Brevinin subfamily. Expressed by the skin glands.

It localises to the secreted. Functionally, antimicrobial peptide active against a variety of Gram-positive and some Gram-negative bacterial strains. Has antifungal activity against a slime mold isolate. Has hemolytic activity against human erythrocytes. In Amolops chunganensis (Chungan torrent frog), this protein is Brevinin-1CG3.